Reading from the N-terminus, the 427-residue chain is Inward rectifier potassium channel 2 (427 aa).

The Cytoplasmic segment spans residues 1-81; it reads MGSVRTNRYS…IFTTCVDIRW (81 aa). Cysteine 76 carries the S-nitrosocysteine modification. A helical transmembrane segment spans residues 82 to 106; the sequence is RWMLVIFCLAFVLSWLFFGCVFWLI. The Extracellular portion of the chain corresponds to 107–128; it reads ALLHGDLDASKESKACVSEVNS. Positions 129-140 form an intramembrane region, helical; Pore-forming; sequence FTAAFLFSIETQ. Positions 141 to 147 form an intramembrane region, pore-forming; that stretch reads TTIGYGF. Positions 142–147 match the Selectivity filter motif; it reads TIGYGF. At 148-156 the chain is on the extracellular side; sequence RCVTDECPI. A helical membrane pass occupies residues 157 to 178; sequence AVFMVVFQSIVGCIIDAFIIGA. Over 179 to 427 the chain is Cytoplasmic; the sequence is VMAKMAKPKK…PRPLRRESEI (249 aa). Positions 181-208 are polyphosphoinositide (PIP2)-binding; the sequence is AKMAKPKKRNETLVFSHNAVIAMRDGKL. The tract at residues 384 to 427 is disordered; sequence SKEEDDSENGVPESTSTDTPPDIDLHNQASVPLEPRPLRRESEI. The PDZ-binding signature appears at 425 to 427; sequence SEI.

This sequence belongs to the inward rectifier-type potassium channel (TC 1.A.2.1) family. KCNJ2 subfamily. Homotetramer. Homomultimeric and heteromultimeric association with KCNJ4/Kir2.3. Can form heteromeric channels with Kir2.6/KCNJ18. Associates, via its PDZ-recognition domain, with a complex containing LIN7A, LIN7B, LIN7C, DLG1, CASK and APBA1. Post-translationally, S-nitrosylation increases the open probability and inward rectifying currents.

The protein resides in the cell membrane. It localises to the sarcolemma. It is found in the T-tubule. The catalysed reaction is K(+)(in) = K(+)(out). Activated by phosphatidylinositol 4,5 biphosphate (PtdIns(4,5)P2). Its function is as follows. Inward rectifier potassium channels are characterized by a greater tendency to allow potassium to flow into the cell rather than out of it. Their voltage dependence is regulated by the concentration of extracellular potassium; as external potassium is raised, the voltage range of the channel opening shifts to more positive voltages. The inward rectification is mainly due to the blockage of outward current by internal magnesium. Blocked by external barium or cesium. Probably participates in establishing action potential waveform and excitability of neuronal and muscle tissues. The polypeptide is Inward rectifier potassium channel 2 (KCNJ2) (Cavia porcellus (Guinea pig)).